Here is a 291-residue protein sequence, read N- to C-terminus: N-acetylmannosamine kinase (291 aa).

Residues 5–12 (AVDIGGTK) and 132–139 (GVGGGIVV) contribute to the ATP site. Residues His-156, Cys-166, Cys-168, and Cys-173 each contribute to the Zn(2+) site.

It belongs to the ROK (NagC/XylR) family. NanK subfamily. As to quaternary structure, homodimer.

It catalyses the reaction an N-acyl-D-mannosamine + ATP = an N-acyl-D-mannosamine 6-phosphate + ADP + H(+). The protein operates within amino-sugar metabolism; N-acetylneuraminate degradation; D-fructose 6-phosphate from N-acetylneuraminate: step 2/5. Functionally, catalyzes the phosphorylation of N-acetylmannosamine (ManNAc) to ManNAc-6-P. In Escherichia coli O6:H1 (strain CFT073 / ATCC 700928 / UPEC), this protein is N-acetylmannosamine kinase (nanK2).